The primary structure comprises 206 residues: SOSS complex subunit B2 (206 aa).

The segment at residues 26 to 89 (IVLEIGRVTK…SMWKGCLTLY (64 aa)) is a DNA-binding region (OB). 2 disordered regions span residues 114-146 (EPNP…GTGT) and 166-206 (SYAG…AFKR). Over residues 181-196 (LPGTANNQTVMTTISN) the composition is skewed to polar residues.

This sequence belongs to the SOSS-B family. SOSS-B2 subfamily. As to quaternary structure, component of the SOSS complex, composed of SOSS-B (SOSS-B1/NABP2 or SOSS-B2/NABP1), SOSS-A/INTS3 and SOSS-C/INIP. SOSS complexes containing SOSS-B1/NABP2 are more abundant than complexes containing SOSS-B2/NABP1.

The protein localises to the nucleus. Functionally, component of the SOSS complex, a multiprotein complex that functions downstream of the MRN complex to promote DNA repair and G2/M checkpoint. In the SOSS complex, acts as a sensor of single-stranded DNA that binds to single-stranded DNA, in particular to polypyrimidines. The SOSS complex associates with DNA lesions and influences diverse endpoints in the cellular DNA damage response including cell-cycle checkpoint activation, recombinational repair and maintenance of genomic stability. Required for efficient homologous recombination-dependent repair of double-strand breaks (DSBs) and ATM-dependent signaling pathways. The polypeptide is SOSS complex subunit B2 (NABP1) (Bos taurus (Bovine)).